We begin with the raw amino-acid sequence, 433 residues long: Serine--tRNA ligase (433 aa).

L-serine is bound at residue 235-237 (TSE). 266–268 (RSE) serves as a coordination point for ATP. Residue glutamate 289 participates in L-serine binding. 353–356 (EISS) is a binding site for ATP. Serine 388 is a binding site for L-serine.

Belongs to the class-II aminoacyl-tRNA synthetase family. Type-1 seryl-tRNA synthetase subfamily. As to quaternary structure, homodimer. The tRNA molecule binds across the dimer.

It is found in the cytoplasm. It carries out the reaction tRNA(Ser) + L-serine + ATP = L-seryl-tRNA(Ser) + AMP + diphosphate + H(+). The catalysed reaction is tRNA(Sec) + L-serine + ATP = L-seryl-tRNA(Sec) + AMP + diphosphate + H(+). It participates in aminoacyl-tRNA biosynthesis; selenocysteinyl-tRNA(Sec) biosynthesis; L-seryl-tRNA(Sec) from L-serine and tRNA(Sec): step 1/1. Its function is as follows. Catalyzes the attachment of serine to tRNA(Ser). Is also able to aminoacylate tRNA(Sec) with serine, to form the misacylated tRNA L-seryl-tRNA(Sec), which will be further converted into selenocysteinyl-tRNA(Sec). The sequence is that of Serine--tRNA ligase from Burkholderia cenocepacia (strain ATCC BAA-245 / DSM 16553 / LMG 16656 / NCTC 13227 / J2315 / CF5610) (Burkholderia cepacia (strain J2315)).